The primary structure comprises 260 residues: Cytosolic Fe-S cluster assembly factor Nubp2 homolog 1 (260 aa).

Residue 14 to 21 (GKGGVGKS) coordinates ATP. [4Fe-4S] cluster-binding residues include Cys-188 and Cys-191.

It belongs to the Mrp/NBP35 ATP-binding proteins family. NUBP2/CFD1 subfamily. Heterotetramer of 2 Nubp1 and 2 Nubp2 chains. [4Fe-4S] cluster is required as a cofactor.

It localises to the cytoplasm. Component of the cytosolic iron-sulfur (Fe/S) protein assembly (CIA) machinery. Required for maturation of extramitochondrial Fe-S proteins. The Nubp1-Nubp2 heterotetramer forms a Fe-S scaffold complex, mediating the de novo assembly of an Fe-S cluster and its transfer to target apoproteins. This is Cytosolic Fe-S cluster assembly factor Nubp2 homolog 1 from Drosophila yakuba (Fruit fly).